The following is a 155-amino-acid chain: S-ribosylhomocysteine lyase (155 aa).

Residues His54, His58, and Cys122 each coordinate Fe cation.

The protein belongs to the LuxS family. In terms of assembly, homodimer. Requires Fe cation as cofactor.

It catalyses the reaction S-(5-deoxy-D-ribos-5-yl)-L-homocysteine = (S)-4,5-dihydroxypentane-2,3-dione + L-homocysteine. Its function is as follows. Involved in the synthesis of autoinducer 2 (AI-2) which is secreted by bacteria and is used to communicate both the cell density and the metabolic potential of the environment. The regulation of gene expression in response to changes in cell density is called quorum sensing. Catalyzes the transformation of S-ribosylhomocysteine (RHC) to homocysteine (HC) and 4,5-dihydroxy-2,3-pentadione (DPD). The sequence is that of S-ribosylhomocysteine lyase from Deinococcus geothermalis (strain DSM 11300 / CIP 105573 / AG-3a).